An 89-amino-acid polypeptide reads, in one-letter code: Small ribosomal subunit protein uS15 (89 aa).

The protein belongs to the universal ribosomal protein uS15 family. As to quaternary structure, part of the 30S ribosomal subunit. Forms a bridge to the 50S subunit in the 70S ribosome, contacting the 23S rRNA.

Functionally, one of the primary rRNA binding proteins, it binds directly to 16S rRNA where it helps nucleate assembly of the platform of the 30S subunit by binding and bridging several RNA helices of the 16S rRNA. Its function is as follows. Forms an intersubunit bridge (bridge B4) with the 23S rRNA of the 50S subunit in the ribosome. This chain is Small ribosomal subunit protein uS15, found in Beutenbergia cavernae (strain ATCC BAA-8 / DSM 12333 / CCUG 43141 / JCM 11478 / NBRC 16432 / NCIMB 13614 / HKI 0122).